Consider the following 782-residue polypeptide: Shutoff protein (782 aa).

Residues 262–329 (VMNQLLIKRA…AVLVTVELEC (68 aa)) are binding to host EIF4G. Residues 332 to 450 (RFFSDITTLR…SLWTGFDERT (119 aa)) enclose the RRM domain. Tyr349 and Tyr665 each carry phosphotyrosine; by host. Residues 715-760 (GGRILGESGRGRGRGLGRMGGGGGGQPRRGSRGGGGRFQGRSDRRQ) form a disordered region. Over residues 728 to 752 (RGLGRMGGGGGGQPRRGSRGGGGRF) the composition is skewed to gly residues.

Belongs to the adenoviridae shutoff protein family. As to quaternary structure, monomer. Interacts with hexon protein; this interaction allows chaperoning and trimerization of hexon proteins. Interacts (via N-terminus) with host initiation factor EIF4G (via C-terminus). Interacts (via RRM domain) with viral mRNAs that contain the tripartite leader; this interaction allows ribosome shunting and expression of viral late mRNAs. Might be cleaved by the viral protease. Post-translationally, phosphorylated. Tyrosine phosphorylation enhances preferential binding to tripartite leader mRNAs and allows ribosome shunting. In terms of processing, methylated. Asymmetric dimethylation by host PRMT1 of the Arg/Gly-rich region may regulate shutoff protein binding to hexon and promote the capsid assembly in the nucleus.

The protein resides in the host cytoplasm. In terms of biological role, protein that inhibits host translation while promoting late viral translation by ribosome shunting. Blocks host cap-dependent translation by binding to eIF4G, displacing MKNK1 from cap initiation complexes and preventing EIF4E phosphorylation. Binds to the tripartite leader sequence of viral late mRNAs and recruits host eIF4G, PABPC1/poly-A binding protein and 40S ribosomes subunits on viral mRNAs, allowing ribosome shunting and efficient translation of late viral mRNAs even though conventional translation via ribosome scanning from the cap has been shut off in the host cell. During assembly, acts as a chaperone protein that helps hexon proteins assembly into trimers. This Human adenovirus A serotype 12 (HAdV-12) protein is Shutoff protein.